The chain runs to 870 residues: Breast cancer anti-estrogen resistance protein 1 (870 aa).

An N-acetylmethionine modification is found at M1. The 63-residue stretch at H3–G65 folds into the SH3 domain. Positions K70–P156 are disordered. A compositionally biased stretch (pro residues) spans G73–P85. Polar residues predominate over residues S97–P111. A substrate for kinases region spans residues Y115–A416. Y128 is modified (phosphotyrosine; by SRC). Phosphoserine is present on residues S134 and S139. A compositionally biased stretch (polar residues) spans P135–Q151. Phosphotyrosine is present on Y234. Y249 bears the Phosphotyrosine; by ABL1 mark. T269 is subject to Phosphothreonine. At S292 the chain carries Phosphoserine. Residues Y362, Y372, and Y410 each carry the phosphotyrosine modification. 3 disordered regions span residues A411 to P449, K609 to G658, and I715 to G734. Positions A416–R426 are enriched in basic and acidic residues. Positions L427–L444 are enriched in low complexity. Phosphoserine occurs at positions 428, 437, and 639. The segment covering T626–N655 has biased composition (polar residues). Residues R635–F643 carry the SH3-binding motif. The segment at F746 to G796 is divergent helix-loop-helix motif.

This sequence belongs to the CAS family. As to quaternary structure, forms complexes in vivo with PTK2/FAK1, adapter protein CRKL and LYN kinase. Heterodimerizes with NEDD9. Component of a complex comprised of SH2D3C, BCAR1/CAS, and CRK. Within the complex, interacts with SH2D3C (via C-terminus), and CRK. Part of a complex comprised of PTPRA, BCAR1, BCAR3 (via SH2 domain) and SRC; the formation of the complex is dependent on integrin mediated-tyrosine phosphorylation of PTPRA. Interacts with BCAR3 (via Ras-GEF domain); the interaction regulates adhesion-dependent serine phosphorylation. Interacts with SMAD2 and SMAD3. Interacts with NPHP1. Interacts with PTK2B/PYK2. Interacts (via C-terminus) with SH2D3C/CHAT isoform 2 (via C-terminus). Interacts with activated CSPG4. Interacts with BMX, INPPL1/SHIP2 and PEAK1. Part of a collagen-stimulated complex involved in cell migration made of CDC42, CRK, TNK2 and BCAR1/p130cas. Interacts with TNK2 via SH3 domains. Interacts (when tyrosine-phosphorylated) with tensin TNS1; the interaction is increased by phosphorylation of TNS1. In terms of processing, PTK2/FAK1 activation mediates phosphorylation at the YDYVHL motif; phosphorylation is most likely catalyzed by SRC family members. SRC-family kinases are recruited to the phosphorylated sites and can phosphorylate other tyrosine residues. Tyrosine phosphorylation is triggered by integrin-mediated adhesion of cells to the extracellular matrix. Post-translationally, dephosphorylated by PTPN14 at Tyr-128. Phosphorylated by SRC kinase in a EDN1- and PTK2B-mediated manner; phosphorylation strengthens its interaction with BCAR3 as part of the PTK2B/BCAR1/BCAR3/RAP1 signaling pathway. Expressed in B-cells (at protein level). Widely expressed with an abundant expression in the testis. Low level of expression seen in the liver, thymus, and peripheral blood leukocytes.

The protein resides in the cell junction. It localises to the focal adhesion. The protein localises to the cytoplasm. It is found in the cell projection. Its subcellular location is the axon. Functionally, docking protein which plays a central coordinating role for tyrosine kinase-based signaling related to cell adhesion. Implicated in induction of cell migration and cell branching. Involved in the BCAR3-mediated inhibition of TGFB signaling. The polypeptide is Breast cancer anti-estrogen resistance protein 1 (BCAR1) (Homo sapiens (Human)).